The chain runs to 163 residues: 3-hydroxyacyl-[acyl-carrier-protein] dehydratase FabZ (163 aa).

His64 is an active-site residue.

The protein belongs to the thioester dehydratase family. FabZ subfamily.

Its subcellular location is the cytoplasm. The enzyme catalyses a (3R)-hydroxyacyl-[ACP] = a (2E)-enoyl-[ACP] + H2O. Involved in unsaturated fatty acids biosynthesis. Catalyzes the dehydration of short chain beta-hydroxyacyl-ACPs and long chain saturated and unsaturated beta-hydroxyacyl-ACPs. The sequence is that of 3-hydroxyacyl-[acyl-carrier-protein] dehydratase FabZ from Caulobacter sp. (strain K31).